A 933-amino-acid chain; its full sequence is Phospholipase SGR2 (933 aa).

A compositionally biased stretch (basic and acidic residues) spans 1–14 (MEDRETHLGTREVN). The segment at 1-22 (MEDRETHLGTREVNETSPDLLK) is disordered. Residue Ser444 is part of the active site. Disordered stretches follow at residues 475-517 (PDEE…GQDN) and 553-598 (RGGQ…ESVN). Residues 505-517 (QLNNPEKITGQDN) show a composition bias toward polar residues. A compositionally biased stretch (basic and acidic residues) spans 553–563 (RGGQEDDHHDS). Positions 593-631 (DKESVNSNNEERIKLLQDEVNSLRSKVAQLLSENARILS) form a coiled coil. Positions 669 to 868 (LEFKVDTFFA…ALFIIKHLYR (200 aa)) constitute a DDHD domain. Positions 871–903 (PDGPNSPTESTEGDDSPKDSSRPHSWIDRREAD) are disordered. The span at 885–902 (DSPKDSSRPHSWIDRREA) shows a compositional bias: basic and acidic residues.

Forms oligomers. Expressed in roots, hypocotyls, leaves, stems and floral buds, and, at low levels, in siliques.

It is found in the vacuole membrane. Functionally, involved in vacuolar formation or function (e.g. formation of vacuolar membrane 'bulbs'). Required for amyloplast sedimentation in the endodermis during shoot gravitropism, which are thus acting as statoliths. Particularly important for the negative gravitropism leading to leaf movement observed in darkness. The chain is Phospholipase SGR2 (SGR2) from Arabidopsis thaliana (Mouse-ear cress).